A 1775-amino-acid polypeptide reads, in one-letter code: Stereocilin (1775 aa).

Positions 1-22 are cleaved as a signal peptide; it reads MALSLWPLLLLLLLLLLLSFAV. Residues N65, N202, N297, N366, N427, N476, N540, N565, N656, N824, N916, N964, N1179, and N1274 are each glycosylated (N-linked (GlcNAc...) asparagine).

The protein belongs to the stereocilin family.

It is found in the cell surface. The protein localises to the cell projection. It localises to the kinocilium. Its subcellular location is the stereocilium. In terms of biological role, essential to the formation of horizontal top connectors between outer hair cell stereocilia. This is Stereocilin (STRC) from Homo sapiens (Human).